The chain runs to 358 residues: Fructose-bisphosphate aldolase class 2 (358 aa).

Serine 61 is a D-glyceraldehyde 3-phosphate binding site. Aspartate 109 functions as the Proton donor in the catalytic mechanism. Residues histidine 110, aspartate 144, glutamate 174, and histidine 226 each contribute to the Zn(2+) site. Glycine 227 is a dihydroxyacetone phosphate binding site. Histidine 264 serves as a coordination point for Zn(2+). Dihydroxyacetone phosphate contacts are provided by residues 265 to 267 (GGS) and 286 to 289 (NIDT).

The protein belongs to the class II fructose-bisphosphate aldolase family. The cofactor is Zn(2+).

The enzyme catalyses beta-D-fructose 1,6-bisphosphate = D-glyceraldehyde 3-phosphate + dihydroxyacetone phosphate. It functions in the pathway carbohydrate degradation; glycolysis; D-glyceraldehyde 3-phosphate and glycerone phosphate from D-glucose: step 4/4. In terms of biological role, catalyzes the aldol condensation of dihydroxyacetone phosphate (DHAP or glycerone-phosphate) with glyceraldehyde 3-phosphate (G3P) to form fructose 1,6-bisphosphate (FBP) in gluconeogenesis and the reverse reaction in glycolysis. This chain is Fructose-bisphosphate aldolase class 2 (fbaA), found in Buchnera aphidicola subsp. Acyrthosiphon pisum (strain APS) (Acyrthosiphon pisum symbiotic bacterium).